The chain runs to 901 residues: Protein translocase subunit SecA (901 aa).

ATP is bound by residues Gln87, 105–109 (GEGKT), and Asp512. Residues 839 to 901 (QMEEQRRQES…KYKQCHGRLA (63 aa)) are disordered. Over residues 841–850 (EEQRRQESER) the composition is skewed to basic and acidic residues. Zn(2+)-binding residues include Cys885, Cys887, Cys896, and His897. Residues 891–901 (KKYKQCHGRLA) are compositionally biased toward basic residues.

It belongs to the SecA family. Monomer and homodimer. Part of the essential Sec protein translocation apparatus which comprises SecA, SecYEG and auxiliary proteins SecDF-YajC and YidC. The cofactor is Zn(2+).

The protein resides in the cell inner membrane. Its subcellular location is the cytoplasm. It carries out the reaction ATP + H2O + cellular proteinSide 1 = ADP + phosphate + cellular proteinSide 2.. In terms of biological role, part of the Sec protein translocase complex. Interacts with the SecYEG preprotein conducting channel. Has a central role in coupling the hydrolysis of ATP to the transfer of proteins into and across the cell membrane, serving both as a receptor for the preprotein-SecB complex and as an ATP-driven molecular motor driving the stepwise translocation of polypeptide chains across the membrane. This is Protein translocase subunit SecA from Erwinia tasmaniensis (strain DSM 17950 / CFBP 7177 / CIP 109463 / NCPPB 4357 / Et1/99).